Consider the following 74-residue polypeptide: Transcription attenuation protein MtrB (74 aa).

Belongs to the MtrB family. As to quaternary structure, oligomer of 11 identical subunits arranged in doughnut-like structure.

Required for transcription attenuation control in the Trp operon. This trans-acting factor seems to recognize a 10 bases nucleotide sequence in the Trp leader transcript causing transcription termination. Binds the leader RNA only in presence of L-tryptophan. This is Transcription attenuation protein MtrB from Geobacillus sp. (strain WCH70).